The sequence spans 1378 residues: DNA-directed RNA polymerase subunit beta (1378 aa).

This sequence belongs to the RNA polymerase beta chain family. The RNAP catalytic core consists of 2 alpha, 1 beta, 1 beta' and 1 omega subunit. When a sigma factor is associated with the core the holoenzyme is formed, which can initiate transcription.

The catalysed reaction is RNA(n) + a ribonucleoside 5'-triphosphate = RNA(n+1) + diphosphate. Its function is as follows. DNA-dependent RNA polymerase catalyzes the transcription of DNA into RNA using the four ribonucleoside triphosphates as substrates. This is DNA-directed RNA polymerase subunit beta from Campylobacter jejuni (strain RM1221).